A 671-amino-acid chain; its full sequence is MYQSTLKTILLASALLILPASMSAQKRKAAPKKAATEQVGKPDPNFYIFLCFGQSNMEGNARPEAQDLTSPGPRFLLMPAVDFPEKGRKMGEWCEASAPLCRPNTGLTPADWFGRTLVASLPENIKIGVIHVAIGGIDIKGFLPDSIQNYLKVAPNWMKGMLAAYDNNPYERLVTLAKKAQKDGVIKGILMHQGETNTGDPKWAGMVKQVYDNLCGDLNLKPEEVNLYAGNIVQADGKGVCIGCKKQIDELPLTLHTSQVISSDGCTNGPDRLHFDAAGYRELGCRYGEAVARHLGYEPKRPYIEMPKQIEVPADAFIAETTVPGNEFPKVDKEGRAYFRIAAPEARKVVLDICNKKYDMQRDGKGNFMAVTDPLPVGFHYYFLNINGVNFIDPSTETFFGCNRESGGIEIPEGSEGDYYRPQQGVPAGQVRSIYYYSNEQQTWRHAMVYTPAEYELAKNAKKRYPVLYLQHGMGEDETGWSKQGHMQHIMDNAIAKGEAVPMIVVMESGDIKAPFGGGNNQAGRSAYGASFYPVLLNDLIPYIDSNYRTKSDRENRAMAGLSWGGHQTFDVVLTNLDKFAWLGTFSGAIFGLDVKTAYDGVFANADEFNKKIHYMYMNWGEEDFIKSGDIVKQLRELGIKVDSNESKGTAHEWLTWRRGLNEFIPHLFKK.

Residues 1–24 (MYQSTLKTILLASALLILPASMSA) form the signal peptide. The carbohydrate acetyl esterase stretch occupies residues 1 to 296 (MYQSTLKTIL…YGEAVARHLG (296 aa)). Catalysis depends on for acetyl esterase activity residues serine 55, aspartate 271, and histidine 274. The feruloyl esterase stretch occupies residues 297–671 (YEPKRPYIEM…NEFIPHLFKK (375 aa)).

In the N-terminal section; belongs to the carbohydrate esterase 6 family.

The catalysed reaction is feruloyl-polysaccharide + H2O = ferulate + polysaccharide.. The protein operates within glycan degradation; xylan degradation. Functionally, involved in degradation of plant cell wall polysaccharides. Bifunctional esterase that possesses both acetyl esterase and ferulic acid esterase activities. Has deacetylase activity towards acetylated xylo-oligosaccharides smaller than xylo-heptaose, as well as from glucose-pentaacetate. Is also able to release ferulic acid from methylferulate, and from the more natural substrates wheat bran, corn fiber, and XOS(FA,Ac), a corn fiber-derived substrate enriched in O-acetyl and ferulic acid esters. The polypeptide is Carbohydrate acetyl esterase/feruloyl esterase (Xylanibacter ruminicola (strain ATCC 19189 / DSM 19721 / CIP 105475 / JCM 8958 / 23) (Prevotella ruminicola)).